A 590-amino-acid polypeptide reads, in one-letter code: Phenylalanine--tRNA ligase beta subunit (590 aa).

In terms of domain architecture, B5 spans 276-382 (MELDVWDVPV…IMYNYDRFEP (107 aa)). Positions 360, 366, 369, and 370 each coordinate Mg(2+).

It belongs to the phenylalanyl-tRNA synthetase beta subunit family. Type 2 subfamily. As to quaternary structure, tetramer of two alpha and two beta subunits. Requires Mg(2+) as cofactor.

The protein localises to the cytoplasm. It catalyses the reaction tRNA(Phe) + L-phenylalanine + ATP = L-phenylalanyl-tRNA(Phe) + AMP + diphosphate + H(+). The chain is Phenylalanine--tRNA ligase beta subunit from Methanopyrus kandleri (strain AV19 / DSM 6324 / JCM 9639 / NBRC 100938).